Here is a 657-residue protein sequence, read N- to C-terminus: Glycogen debranching enzyme (657 aa).

Residue aspartate 336 is the Nucleophile of the active site. Residue glutamate 371 is the Proton donor of the active site. Over residues 458–467 (NEANGEENRD) the composition is skewed to basic and acidic residues. The interval 458 to 479 (NEANGEENRDGTNNNYSNNHGK) is disordered.

It belongs to the glycosyl hydrolase 13 family.

The enzyme catalyses Hydrolysis of (1-&gt;6)-alpha-D-glucosidic linkages to branches with degrees of polymerization of three or four glucose residues in limit dextrin.. The protein operates within glycan degradation; glycogen degradation. In terms of biological role, removes maltotriose and maltotetraose chains that are attached by 1,6-alpha-linkage to the limit dextrin main chain, generating a debranched limit dextrin. The chain is Glycogen debranching enzyme from Escherichia coli (strain 55989 / EAEC).